Consider the following 796-residue polypeptide: YY1-associated protein 1 (796 aa).

2 disordered regions span residues 1-45 (MEEE…ATPS) and 463-488 (IQPSPSLQPSFNPGKTPAQSTHSEAP). Positions 23–36 (PPDKREGSAVDPGK) are enriched in basic and acidic residues. A compositionally biased stretch (low complexity) spans 463 to 472 (IQPSPSLQPS). Positions 473 to 485 (FNPGKTPAQSTHS) are enriched in polar residues. Phosphoserine is present on serine 724. The interval 755–776 (RQALEPLPQGIQESLNNSSPGD) is disordered. A compositionally biased stretch (polar residues) spans 765-774 (IQESLNNSSP).

Interacts with YY1. Interacts with MAD2L2. Interacts with INO80. Ubiquitous. Detected in small intestine, skeletal muscle, lung, pancreas, brain, stomach, spleen, colon and heart. Detected at very low levels in healthy liver. Highly expressed in most liver carcinomas.

It is found in the cytoplasm. Its subcellular location is the nucleus. It localises to the nucleoplasm. The protein localises to the nucleolus. Its function is as follows. Associates with the INO80 chromatin remodeling complex, which is responsible for transcriptional regulation, DNA repair, and replication. Enhances transcription activation by YY1. Plays a role in cell cycle regulation. This is YY1-associated protein 1 from Homo sapiens (Human).